The following is a 155-amino-acid chain: Cathelicidin-1 (155 aa).

A signal peptide spans 1 to 29 (METQRASLSLGRCSLWLLLLGLALPSASA). Q30 bears the Pyrrolidone carboxylic acid mark. A propeptide spanning residues 30–143 (QVLSYREAVL…KQPWAPPQAA (114 aa)) is cleaved from the precursor. Disulfide bonds link C85–C96, C107–C124, and C146–C154.

Belongs to the cathelicidin family.

The protein localises to the secreted. Potent microbicidal activity; active against S.aureus and E.coli. This chain is Cathelicidin-1 (CATHL1A), found in Ovis aries (Sheep).